The primary structure comprises 559 residues: MSSDLKRRSRTITDGRTRAGARAMLKAIGFTDEDLAKPIIGIANTWIETMPCNINLRALAARVKEGVRAAGGTPMEFNTVAIADGVTMGTEGMKASLISRDLIADSIELMGRGYMFDAIIALVACDKTIPGAAMGLTRLNIPGFLLYGGSIAPGHWRGKEITIQHVYEAIGAVAAGKMTDEELKEIEDAACPGPGACGGQYTANTMATVMEIIGLSPMGTAAVPAADPRKDSVGYRAGQLIMDVLRRDLKPRDILTRAAFENAIASVALTGGSTNAVLHLLALAREAGVPLTLDDFDAISRRTPLCCDLMPSGKYSAIHVDQAGGIQVIARRLVDGGFAHGDAITVTGRTLAEEAADAVETPGQDVIRPLDNPIKPTGGLLVLRGNLAPEGSVVKLFGYERTYHRGPARVFDGEEAAMAAIVGGEIRPDDIVIIRYEGPRGGPGMREMLGVTSAIVGAGLGQSVSLITDGRFSGATRGVMIGHVAPEAARGGPLAIVQEGDEIEINLDERRVDLLLSEEEIADRLLAWQPPAPRYEWGVMARYGALVSSASEGAVLVTP.

Cys-52 provides a ligand contact to [2Fe-2S] cluster. Asp-84 serves as a coordination point for Mg(2+). Cys-125 is a binding site for [2Fe-2S] cluster. Asp-126 and Lys-127 together coordinate Mg(2+). N6-carboxylysine is present on Lys-127. Cys-197 is a [2Fe-2S] cluster binding site. Mg(2+) is bound at residue Glu-447. Residue Ser-473 is the Proton acceptor of the active site.

This sequence belongs to the IlvD/Edd family. As to quaternary structure, homodimer. [2Fe-2S] cluster serves as cofactor. Mg(2+) is required as a cofactor.

It carries out the reaction (2R)-2,3-dihydroxy-3-methylbutanoate = 3-methyl-2-oxobutanoate + H2O. The enzyme catalyses (2R,3R)-2,3-dihydroxy-3-methylpentanoate = (S)-3-methyl-2-oxopentanoate + H2O. It participates in amino-acid biosynthesis; L-isoleucine biosynthesis; L-isoleucine from 2-oxobutanoate: step 3/4. Its pathway is amino-acid biosynthesis; L-valine biosynthesis; L-valine from pyruvate: step 3/4. Functionally, functions in the biosynthesis of branched-chain amino acids. Catalyzes the dehydration of (2R,3R)-2,3-dihydroxy-3-methylpentanoate (2,3-dihydroxy-3-methylvalerate) into 2-oxo-3-methylpentanoate (2-oxo-3-methylvalerate) and of (2R)-2,3-dihydroxy-3-methylbutanoate (2,3-dihydroxyisovalerate) into 2-oxo-3-methylbutanoate (2-oxoisovalerate), the penultimate precursor to L-isoleucine and L-valine, respectively. This Roseiflexus sp. (strain RS-1) protein is Dihydroxy-acid dehydratase.